The primary structure comprises 177 residues: Large ribosomal subunit protein uL6 (177 aa).

This sequence belongs to the universal ribosomal protein uL6 family. In terms of assembly, part of the 50S ribosomal subunit.

This protein binds to the 23S rRNA, and is important in its secondary structure. It is located near the subunit interface in the base of the L7/L12 stalk, and near the tRNA binding site of the peptidyltransferase center. The polypeptide is Large ribosomal subunit protein uL6 (Colwellia psychrerythraea (strain 34H / ATCC BAA-681) (Vibrio psychroerythus)).